A 465-amino-acid polypeptide reads, in one-letter code: Uronate isomerase (465 aa).

It belongs to the metallo-dependent hydrolases superfamily. Uronate isomerase family.

The catalysed reaction is D-glucuronate = D-fructuronate. The enzyme catalyses aldehydo-D-galacturonate = keto-D-tagaturonate. The protein operates within carbohydrate metabolism; pentose and glucuronate interconversion. This Streptococcus equi subsp. equi (strain 4047) protein is Uronate isomerase.